A 488-amino-acid polypeptide reads, in one-letter code: Probable glycine dehydrogenase (decarboxylating) subunit 2 (488 aa).

Lys-273 bears the N6-(pyridoxal phosphate)lysine mark.

It belongs to the GcvP family. C-terminal subunit subfamily. As to quaternary structure, the glycine cleavage system is composed of four proteins: P, T, L and H. In this organism, the P 'protein' is a heterodimer of two subunits. Requires pyridoxal 5'-phosphate as cofactor.

The catalysed reaction is N(6)-[(R)-lipoyl]-L-lysyl-[glycine-cleavage complex H protein] + glycine + H(+) = N(6)-[(R)-S(8)-aminomethyldihydrolipoyl]-L-lysyl-[glycine-cleavage complex H protein] + CO2. Functionally, the glycine cleavage system catalyzes the degradation of glycine. The P protein binds the alpha-amino group of glycine through its pyridoxal phosphate cofactor; CO(2) is released and the remaining methylamine moiety is then transferred to the lipoamide cofactor of the H protein. In Halalkalibacterium halodurans (strain ATCC BAA-125 / DSM 18197 / FERM 7344 / JCM 9153 / C-125) (Bacillus halodurans), this protein is Probable glycine dehydrogenase (decarboxylating) subunit 2.